The primary structure comprises 556 residues: Formate--tetrahydrofolate ligase (556 aa).

65 to 72 provides a ligand contact to ATP; the sequence is TPAGEGKS.

This sequence belongs to the formate--tetrahydrofolate ligase family.

The catalysed reaction is (6S)-5,6,7,8-tetrahydrofolate + formate + ATP = (6R)-10-formyltetrahydrofolate + ADP + phosphate. Its pathway is one-carbon metabolism; tetrahydrofolate interconversion. In Streptococcus equi subsp. equi (strain 4047), this protein is Formate--tetrahydrofolate ligase.